The primary structure comprises 427 residues: Histidine--tRNA ligase (427 aa).

This sequence belongs to the class-II aminoacyl-tRNA synthetase family. As to quaternary structure, homodimer.

The protein localises to the cytoplasm. The enzyme catalyses tRNA(His) + L-histidine + ATP = L-histidyl-tRNA(His) + AMP + diphosphate + H(+). The sequence is that of Histidine--tRNA ligase (hisS) from Mycobacterium leprae (strain TN).